Reading from the N-terminus, the 324-residue chain is Acetyl-coenzyme A carboxylase carboxyl transferase subunit alpha (324 aa).

The region spanning 44 to 298 (RFQNQLVKLQ…KKELTEQLDS (255 aa)) is the CoA carboxyltransferase C-terminal domain.

Belongs to the AccA family. In terms of assembly, acetyl-CoA carboxylase is a heterohexamer composed of biotin carboxyl carrier protein (accB), biotin carboxylase (accC) and two subunits each of ACCase subunit alpha (accA) and ACCase subunit beta (accD).

It is found in the plastid. The protein resides in the chloroplast. The enzyme catalyses N(6)-carboxybiotinyl-L-lysyl-[protein] + acetyl-CoA = N(6)-biotinyl-L-lysyl-[protein] + malonyl-CoA. It participates in lipid metabolism; malonyl-CoA biosynthesis; malonyl-CoA from acetyl-CoA: step 1/1. In terms of biological role, component of the acetyl coenzyme A carboxylase (ACC) complex. First, biotin carboxylase catalyzes the carboxylation of biotin on its carrier protein (BCCP) and then the CO(2) group is transferred by the carboxyltransferase to acetyl-CoA to form malonyl-CoA. The chain is Acetyl-coenzyme A carboxylase carboxyl transferase subunit alpha from Pyropia yezoensis (Susabi-nori).